The sequence spans 275 residues: Shikimate dehydrogenase (NADP(+)) (275 aa).

Shikimate is bound by residues 19-21 (SIS) and threonine 66. Lysine 70 functions as the Proton acceptor in the catalytic mechanism. Glutamate 82 lines the NADP(+) pocket. Shikimate contacts are provided by asparagine 91 and aspartate 106. Residues 129 to 133 (GAGGA), 153 to 158 (NRTYER), and isoleucine 219 contribute to the NADP(+) site. A shikimate-binding site is contributed by tyrosine 221. NADP(+) is bound at residue glycine 242.

The protein belongs to the shikimate dehydrogenase family. Homodimer.

The enzyme catalyses shikimate + NADP(+) = 3-dehydroshikimate + NADPH + H(+). It functions in the pathway metabolic intermediate biosynthesis; chorismate biosynthesis; chorismate from D-erythrose 4-phosphate and phosphoenolpyruvate: step 4/7. Its function is as follows. Involved in the biosynthesis of the chorismate, which leads to the biosynthesis of aromatic amino acids. Catalyzes the reversible NADPH linked reduction of 3-dehydroshikimate (DHSA) to yield shikimate (SA). This chain is Shikimate dehydrogenase (NADP(+)), found in Dictyoglomus turgidum (strain DSM 6724 / Z-1310).